Here is a 291-residue protein sequence, read N- to C-terminus: Nucleotide-binding protein EUBREC_0697 (291 aa).

8 to 15 (GMSGAGKS) is a binding site for ATP. 59-62 (DVRN) provides a ligand contact to GTP.

This sequence belongs to the RapZ-like family.

Displays ATPase and GTPase activities. This Agathobacter rectalis (strain ATCC 33656 / DSM 3377 / JCM 17463 / KCTC 5835 / VPI 0990) (Eubacterium rectale) protein is Nucleotide-binding protein EUBREC_0697.